The chain runs to 262 residues: Leucine-rich repeat-containing protein 18 (262 aa).

LRR repeat units follow at residues 28–49, 51–72, 74–95, 97–118, 122–144, 145–167, and 168–189; these read GRKR…ILRL, DIDE…IAKF, NLRW…IGQM, SLLF…VELN, NIRT…GALK, ELHE…AKLP, and KLKK…EMFV.

In terms of tissue distribution, exclusively expressed in spermatocytes and roud spermatids within seminiferous tubules during spermatogenesis.

It is found in the cytoplasm. May be involved in the regulation of spermatogenesis and sperm maturation. The chain is Leucine-rich repeat-containing protein 18 (Lrrc18) from Mus musculus (Mouse).